Here is a 490-residue protein sequence, read N- to C-terminus: Bifunctional dihydrocamalexate synthase/camalexin synthase (490 aa).

Residues 1 to 21 (MSVFLCFLVLLPLILIFLNVL) traverse the membrane as a helical segment.

The protein belongs to the cytochrome P450 family.

It localises to the membrane. The enzyme catalyses 2-(L-cystein-S-yl)-2-(1H-indol-3-yl)-acetonitrile + 2 reduced [NADPH--hemoprotein reductase] + 2 O2 = camalexin + hydrogen cyanide + 2 oxidized [NADPH--hemoprotein reductase] + CO2 + 4 H2O + 2 H(+). It catalyses the reaction 2-(L-cystein-S-yl)-2-(1H-indol-3-yl)-acetonitrile + reduced [NADPH--hemoprotein reductase] + O2 = (R)-dihydrocamalexate + hydrogen cyanide + oxidized [NADPH--hemoprotein reductase] + 2 H2O + 2 H(+). The catalysed reaction is (R)-dihydrocamalexate + reduced [NADPH--hemoprotein reductase] + O2 = camalexin + oxidized [NADPH--hemoprotein reductase] + CO2 + 2 H2O. Its function is as follows. Multifunctional enzyme involved in the biosynthesis of the indole-derived phytoalexin camalexin. Catalyzes two reactions, the formation of dihydrocamalexate from indole-3-acetonitrile-cysteine conjugate and the oxidative decarboxylation of dihydrocamalexate which is the final step in camalexin biosynthesis. Required for the resistance to the fungal pathogens A.brassicicola, B.cinerea, B.elliptica, B.tulipae, L.maculans and Colletotrichum higginsianum. Seems not to be required for resistance to P.syringae, P.porri, and not involved in age-related resistance. This chain is Bifunctional dihydrocamalexate synthase/camalexin synthase (CYP71B15), found in Arabidopsis thaliana (Mouse-ear cress).